Reading from the N-terminus, the 130-residue chain is Mediator of RNA polymerase II transcription subunit 10 (130 aa).

It belongs to the Mediator complex subunit 10 family. As to quaternary structure, component of the Mediator complex.

The protein resides in the nucleus. Functionally, component of the Mediator complex, a coactivator involved in the regulated transcription of nearly all RNA polymerase II-dependent genes. Mediator functions as a bridge to convey information from gene-specific regulatory proteins to the basal RNA polymerase II transcription machinery. Mediator is recruited to promoters by direct interactions with regulatory proteins and serves as a scaffold for the assembly of a functional preinitiation complex with RNA polymerase II and the general transcription factors. The protein is Mediator of RNA polymerase II transcription subunit 10 (MED10) of Aedes aegypti (Yellowfever mosquito).